Reading from the N-terminus, the 65-residue chain is Large ribosomal subunit protein bL35 (65 aa).

Belongs to the bacterial ribosomal protein bL35 family.

The polypeptide is Large ribosomal subunit protein bL35 (Prochlorococcus marinus (strain MIT 9313)).